The sequence spans 721 residues: Protein mu-NS (721 aa).

The interaction with sigma-NS stretch occupies residues 1–13 (MASFKGFSANTVP). Residues 1 to 38 (MASFKGFSANTVPVSKTRKDTSSLTATPGLRAPSMSSP) form an RNA-binding region. An interaction with mu-2 region spans residues 14–40 (VSKTRKDTSSLTATPGLRAPSMSSPVD). Residues 17–37 (TRKDTSSLTATPGLRAPSMSS) form a disordered region. Positions 471–721 (QSDTVDGIKL…IDFSVPADEL (251 aa)) are involved in the formation of factory-like inclusions. 2 coiled-coil regions span residues 523–556 (LLSQ…ADVK) and 632–686 (KQAH…NQRQ).

The protein belongs to the orthoreovirus mu-NS protein family. Interacts with mu-2. Interacts with sigma-NS; in viral factories. Interacts with the inner capsid proteins lambda-1 and sigma-2, and outer capsid protein lambda-2; in viral factories. The N-terminus is blocked.

The protein localises to the host cytoplasm. Non-structural protein implicated with protein sigma-NS in forming the matrix of viral factories, which are large inclusions in the host cytoplasm where replication intermediates are assembled and viral RNA replication takes place. Together with mu-2, recruits the other core proteins to these factories. This chain is Protein mu-NS (M3), found in Mammalia (T2J).